The primary structure comprises 236 residues: 2-C-methyl-D-erythritol 4-phosphate cytidylyltransferase (236 aa).

The protein belongs to the IspD/TarI cytidylyltransferase family. IspD subfamily.

It carries out the reaction 2-C-methyl-D-erythritol 4-phosphate + CTP + H(+) = 4-CDP-2-C-methyl-D-erythritol + diphosphate. The protein operates within isoprenoid biosynthesis; isopentenyl diphosphate biosynthesis via DXP pathway; isopentenyl diphosphate from 1-deoxy-D-xylulose 5-phosphate: step 2/6. Catalyzes the formation of 4-diphosphocytidyl-2-C-methyl-D-erythritol from CTP and 2-C-methyl-D-erythritol 4-phosphate (MEP). The sequence is that of 2-C-methyl-D-erythritol 4-phosphate cytidylyltransferase from Burkholderia cenocepacia (strain ATCC BAA-245 / DSM 16553 / LMG 16656 / NCTC 13227 / J2315 / CF5610) (Burkholderia cepacia (strain J2315)).